The primary structure comprises 100 residues: Urease subunit gamma (100 aa).

Belongs to the urease gamma subunit family. Heterotrimer of UreA (gamma), UreB (beta) and UreC (alpha) subunits. Three heterotrimers associate to form the active enzyme.

Its subcellular location is the cytoplasm. It carries out the reaction urea + 2 H2O + H(+) = hydrogencarbonate + 2 NH4(+). The protein operates within nitrogen metabolism; urea degradation; CO(2) and NH(3) from urea (urease route): step 1/1. This is Urease subunit gamma from Prochlorococcus marinus (strain MIT 9312).